The primary structure comprises 288 residues: 2-methoxy-6-polyprenyl-1,4-benzoquinol methylase, mitochondrial (288 aa).

Residues 1–27 constitute a mitochondrion transit peptide; that stretch reads MALRSVSRRLGSRILNQRSFVASLHSH. S-adenosyl-L-methionine contacts are provided by residues Thr-94, Asp-130, and 160-161; that span reads DA.

The protein belongs to the class I-like SAM-binding methyltransferase superfamily. MenG/UbiE family. In terms of assembly, component of a multi-subunit COQ enzyme complex.

The protein localises to the mitochondrion inner membrane. The catalysed reaction is a 2-methoxy-6-(all-trans-polyprenyl)benzene-1,4-diol + S-adenosyl-L-methionine = a 5-methoxy-2-methyl-3-(all-trans-polyprenyl)benzene-1,4-diol + S-adenosyl-L-homocysteine + H(+). It participates in cofactor biosynthesis; ubiquinone biosynthesis. Its function is as follows. Methyltransferase required for the conversion of 2-polyprenyl-6-methoxy-1,4-benzoquinol (DDMQH2) to 2-polyprenyl-3-methyl-6-methoxy-1,4-benzoquinol (DMQH2). This Arabidopsis thaliana (Mouse-ear cress) protein is 2-methoxy-6-polyprenyl-1,4-benzoquinol methylase, mitochondrial.